The primary structure comprises 120 residues: Large ribosomal subunit protein bL19 (120 aa).

Belongs to the bacterial ribosomal protein bL19 family.

Its function is as follows. This protein is located at the 30S-50S ribosomal subunit interface and may play a role in the structure and function of the aminoacyl-tRNA binding site. The protein is Large ribosomal subunit protein bL19 of Gloeothece citriformis (strain PCC 7424) (Cyanothece sp. (strain PCC 7424)).